The chain runs to 580 residues: 2-succinyl-5-enolpyruvyl-6-hydroxy-3-cyclohexene-1-carboxylate synthase (580 aa).

The protein belongs to the TPP enzyme family. MenD subfamily. Homodimer. The cofactor is Mg(2+). Requires Mn(2+) as cofactor. Thiamine diphosphate serves as cofactor.

The enzyme catalyses isochorismate + 2-oxoglutarate + H(+) = 5-enolpyruvoyl-6-hydroxy-2-succinyl-cyclohex-3-ene-1-carboxylate + CO2. The protein operates within quinol/quinone metabolism; 1,4-dihydroxy-2-naphthoate biosynthesis; 1,4-dihydroxy-2-naphthoate from chorismate: step 2/7. It functions in the pathway quinol/quinone metabolism; menaquinone biosynthesis. In terms of biological role, catalyzes the thiamine diphosphate-dependent decarboxylation of 2-oxoglutarate and the subsequent addition of the resulting succinic semialdehyde-thiamine pyrophosphate anion to isochorismate to yield 2-succinyl-5-enolpyruvyl-6-hydroxy-3-cyclohexene-1-carboxylate (SEPHCHC). The polypeptide is 2-succinyl-5-enolpyruvyl-6-hydroxy-3-cyclohexene-1-carboxylate synthase (Listeria monocytogenes serovar 1/2a (strain ATCC BAA-679 / EGD-e)).